The sequence spans 347 residues: FK506-binding protein-like (347 aa).

The segment at 1-24 (METSPISPMNEKNTAQPQQREENA) is disordered. Residue T3 is modified to Phosphothreonine. 3 TPR repeats span residues 208 to 241 (AKEE…LLTL), 250 to 283 (TTLY…EPGH), and 284 to 317 (LKAL…DPKN).

In terms of assembly, forms a ternary complex with CDKN1A/p21 and HSP90AB1/Hsp90.

May be involved in response to X-ray. Regulates p21 protein stability by binding to Hsp90 and p21. This chain is FK506-binding protein-like (Fkbpl), found in Mus musculus (Mouse).